The sequence spans 158 residues: Transcription elongation factor GreA (158 aa).

The stretch at 3–75 (TEKTYPMTQE…TQLENMIRNA (73 aa)) forms a coiled coil.

It belongs to the GreA/GreB family.

Functionally, necessary for efficient RNA polymerase transcription elongation past template-encoded arresting sites. The arresting sites in DNA have the property of trapping a certain fraction of elongating RNA polymerases that pass through, resulting in locked ternary complexes. Cleavage of the nascent transcript by cleavage factors such as GreA or GreB allows the resumption of elongation from the new 3'terminus. GreA releases sequences of 2 to 3 nucleotides. In Bacillus cereus (strain ATCC 14579 / DSM 31 / CCUG 7414 / JCM 2152 / NBRC 15305 / NCIMB 9373 / NCTC 2599 / NRRL B-3711), this protein is Transcription elongation factor GreA.